A 336-amino-acid chain; its full sequence is tRNA N6-adenosine threonylcarbamoyltransferase (336 aa).

The Fe cation site is built by H114 and H118. Substrate-binding positions include 136 to 140 (LVSGG), D169, G182, D186, and N275. D301 is a binding site for Fe cation.

It belongs to the KAE1 / TsaD family. Fe(2+) serves as cofactor.

It localises to the cytoplasm. It catalyses the reaction L-threonylcarbamoyladenylate + adenosine(37) in tRNA = N(6)-L-threonylcarbamoyladenosine(37) in tRNA + AMP + H(+). Functionally, required for the formation of a threonylcarbamoyl group on adenosine at position 37 (t(6)A37) in tRNAs that read codons beginning with adenine. Is involved in the transfer of the threonylcarbamoyl moiety of threonylcarbamoyl-AMP (TC-AMP) to the N6 group of A37, together with TsaE and TsaB. TsaD likely plays a direct catalytic role in this reaction. The sequence is that of tRNA N6-adenosine threonylcarbamoyltransferase from Streptococcus pneumoniae serotype 4 (strain ATCC BAA-334 / TIGR4).